Consider the following 204-residue polypeptide: MTKPQLSYFKVRALGQFPRVLLSYLSIDYDNNYIDKIDENIIDDLKYGQLPLYTDSNGFKLVQSMAISKYIASQHDFVGKTPEEKALVDETLAAVNIDVFTFIIRVFRGVEEKEKIQEIIIPRFFAKWNQILGEKKYLAGGNSYTLADLYVYVAYEYIGYVLPFAADLLYNGKFPHLDSLKEHFESNKGVAEYLKNRPITERKI.

The residue at position 2 (Thr-2) is an N-acetylthreonine. The 78-residue stretch at 2 to 79 (TKPQLSYFKV…YIASQHDFVG (78 aa)) folds into the GST N-terminal domain. Glutathione-binding positions include Tyr-8, 49–50 (QL), and 63–64 (QS). One can recognise a GST C-terminal domain in the interval 81-202 (TPEEKALVDE…YLKNRPITER (122 aa)).

The protein belongs to the GST superfamily. Alpha family.

It catalyses the reaction RX + glutathione = an S-substituted glutathione + a halide anion + H(+). Functionally, conjugation of reduced glutathione to a wide number of exogenous and endogenous hydrophobic electrophiles. The chain is Putative glutathione S-transferase alpha-3 (gsta3) from Dictyostelium discoideum (Social amoeba).